A 39-amino-acid chain; its full sequence is Photosystem II reaction center protein X (39 aa).

A helical membrane pass occupies residues 10–30; sequence SSLVWAAVIVVIPAAVALVLI.

Belongs to the PsbX family. Type 1 subfamily. In terms of assembly, PSII is composed of 1 copy each of membrane proteins PsbA, PsbB, PsbC, PsbD, PsbE, PsbF, PsbH, PsbI, PsbJ, PsbK, PsbL, PsbM, PsbT, PsbX, PsbY, Psb30/Ycf12, peripheral proteins PsbO, CyanoQ (PsbQ), PsbU, PsbV and a large number of cofactors. It forms dimeric complexes.

The protein resides in the cellular thylakoid membrane. Its function is as follows. Involved in the binding and/or turnover of quinones at the Q(B) site of photosystem II (PSII). PSII is a light-driven water plastoquinone oxidoreductase, using light energy to abstract electrons from H(2)O, generating a proton gradient subsequently used for ATP formation. The sequence is that of Photosystem II reaction center protein X from Prochlorococcus marinus (strain MIT 9303).